A 263-amino-acid polypeptide reads, in one-letter code: Non-homologous end joining protein Ku 3 (263 aa).

The Ku domain maps to F6–R169.

Belongs to the prokaryotic Ku family. As to quaternary structure, homodimer. Interacts with LigD.

Its function is as follows. With LigD forms a non-homologous end joining (NHEJ) DNA repair enzyme, which repairs dsDNA breaks with reduced fidelity. Binds linear dsDNA with 5'- and 3'- overhangs but not closed circular dsDNA nor ssDNA. Recruits and stimulates the ligase activity of LigD. The protein is Non-homologous end joining protein Ku 3 of Saccharopolyspora erythraea (strain ATCC 11635 / DSM 40517 / JCM 4748 / NBRC 13426 / NCIMB 8594 / NRRL 2338).